The following is a 113-amino-acid chain: Ranasmurfin (113 aa).

Tyr2 carries the post-translational modification 2',4',5'-topaquinone. Positions 2-31 (YACSFPPSEIPGSKECLAEALQKHQGFKKK) form a cross-link, lysine tyrosylquinone (Tyr-Lys). Disulfide bonds link Cys4/Cys62, Cys17/Cys65, and Cys37/Cys101. Residue Ser9 is modified to Aminomalonic acid (Ser); in chain B. The segment at residues 17–65 (CLAEALQKHQGFKKKSYALICAYLNYKEDAENYERAAEDFDSAVKCTGC) is a cross-link (S-cysteinyl 3-(oxidosulfanyl)alanine (Cys-Cys); in chain B). Positions 30-108 (KKSYALICAY…SLCTLFQKLY (79 aa)) form a cross-link, lysine tyrosylquinone (Lys-Tyr). Residue Cys65 is modified to Cysteine sulfenic acid (-SOH); in chain B. Tyr108 is subject to 2',4',5'-topaquinone. Residues Tyr108 and His112 each contribute to the Zn(2+) site. Residue Tyr108 forms a 5'-tyrosyl-5'-aminotyrosine (Tyr-Tyr) (interchain with Y-108) linkage.

Homodimer. The two chains, designated A and B, differ in their modifications, but not, it is thought, in their sequence. Zn(2+) is required as a cofactor. Foam nest.

Its subcellular location is the secreted. This Polypedates leucomystax (Common tree frog) protein is Ranasmurfin.